Here is a 983-residue protein sequence, read N- to C-terminus: Ephrin type-A receptor 3 (983 aa).

An N-terminal signal peptide occupies residues 1 to 19 (MDRRRLPLLLLCAALGSAG). At 20–540 (RLSARPGNEV…SFSISSENSQ (521 aa)) the chain is on the extracellular side. Residues 28–206 (EVNLLDSKTI…YFKKCPFTVK (179 aa)) form the Eph LBD domain. N-linked (GlcNAc...) asparagine glycosylation is found at Asn-231, Asn-336, Asn-390, Asn-403, and Asn-492. Fibronectin type-III domains lie at 324-434 (PPSA…TNQA) and 435-530 (APSP…TSPD). Residues 541 to 564 (VVMIAISAAVAIILLTVVVYVLIG) traverse the membrane as a helical segment. Over 565 to 983 (RFCGYKKSKH…THTKNSPVPV (419 aa)) the chain is Cytoplasmic. Residues Tyr-596 and Tyr-602 each carry the phosphotyrosine; by autocatalysis modification. The 262-residue stretch at 621–882 (ISIDKVVGAG…QIVSILDKLI (262 aa)) folds into the Protein kinase domain. ATP is bound by residues 628-633 (GAGEFG), Lys-653, and 700-706 (EYMENGS). Tyr-701 is modified (phosphotyrosine; by autocatalysis). The active-site Proton acceptor is Asp-746. ATP is bound at residue 750-751 (RN). Tyr-779 carries the phosphotyrosine; by autocatalysis modification. One can recognise an SAM domain in the interval 911 to 975 (SAFRTAGDWL…VSSIKTLETH (65 aa)). The PDZ-binding motif lies at 981–983 (VPV).

The protein belongs to the protein kinase superfamily. Tyr protein kinase family. Ephrin receptor subfamily. Heterotetramer upon binding of the ligand. The heterotetramer is composed of an ephrin dimer and a receptor dimer. Oligomerization is probably required to induce biological responses. Autophosphorylates upon activation by EFNA5. Highly expressed in the developing brain and embryonic tissues. In adult, the greatest levels of expression occur in the brain. It is expressed in a graded manner across the retina with the highest expression at its temporal pole. Detectable in all other adult tissues examined, except the liver.

It localises to the cell membrane. It catalyses the reaction L-tyrosyl-[protein] + ATP = O-phospho-L-tyrosyl-[protein] + ADP + H(+). Receptor tyrosine kinase which binds promiscuously membrane-bound ephrin family ligands residing on adjacent cells, leading to contact-dependent bidirectional signaling into neighboring cells. The signaling pathway downstream of the receptor is referred to as forward signaling while the signaling pathway downstream of the ephrin ligand is referred to as reverse signaling. Highly promiscuous for ephrin-A ligands it binds preferentially EFNA5. Upon activation by EFNA5 regulates cell-cell adhesion, cytoskeletal organization and cell migration. Plays a role in cardiac cells migration and differentiation probably through activation by EFNA1. Involved in the retinotectal mapping of neurons. May also control the segregation but not the guidance of motor and sensory axons during neuromuscular circuit development. This Gallus gallus (Chicken) protein is Ephrin type-A receptor 3 (EPHA3).